Consider the following 156-residue polypeptide: Arginine repressor (156 aa).

The protein belongs to the ArgR family.

It localises to the cytoplasm. The protein operates within amino-acid biosynthesis; L-arginine biosynthesis [regulation]. Its function is as follows. Regulates arginine biosynthesis genes. The chain is Arginine repressor from Shewanella sediminis (strain HAW-EB3).